The primary structure comprises 398 residues: Protein ELC (398 aa).

Positions 18 to 162 constitute a UEV domain; it reads ALSQRGPSSV…ARDPPLYSRR (145 aa). The segment at 157 to 202 is disordered; that stretch reads PLYSRRRPQPPPPSPPTVYDSSLSRPPSADQSLPRPFPPSPYGGGV. A compositionally biased stretch (polar residues) spans 175 to 187; that stretch reads YDSSLSRPPSADQ. Positions 247–291 form a coiled coil; that stretch reads EAEAEELLSLQAGLKRREDELNIGLKEMVEEKETLEQQLQIISMN. Positions 322-390 constitute an SB domain; that stretch reads DTLSKQMLEC…RAAQMEVQVA (69 aa).

The protein belongs to the ubiquitin-conjugating enzyme family. UEV subfamily. As to quaternary structure, component of the endosomal sorting required for transport complex I (ESCRT-I), composed of ELC, VPS28 and VPS37. Interacts with VPS28 and VPS37. Binds ubiquitin in vitro. Interacts with FREE1. Interacts with TOL9/TOM1D. Interacts with BRO1/ALIX. Interacts with SINAT1, SINAT2, SINAT3 and SINAT4. Ubiquitinated by SINAT1, SINAT2, SINAT3 and SINAT4 for subsequent proteasomal degradation. Expressed in roots, stems, leaves and flowers.

The protein resides in the early endosome. The protein localises to the late endosome. It localises to the prevacuolar compartment. Functionally, component of the ESCRT-I complex (endosomal sorting complex required for transport I), a regulator of vesicular trafficking process. Required for the sorting of endocytic ubiquitinated cargos into multivesicular bodies (MVBs). May control nuclear division through the microtubule cytoskeleton. The chain is Protein ELC from Arabidopsis thaliana (Mouse-ear cress).